The chain runs to 351 residues: Phospho-N-acetylmuramoyl-pentapeptide-transferase (351 aa).

10 helical membrane passes run 22–42, 65–85, 87–107, 128–148, 158–178, 190–210, 225–245, 254–274, 279–299, and 328–348; these read ILAFFLSFFITIFIMPKFISW, TPTMGGLIYITSAVISILITT, FNKYVLLTLLLLVYFTYLGFI, FLLQWVGALVISYLLIKVGFD, YPIFDMGYYAVIFWAFIIVAM, GLATVPSIFSLFTLGILLYIV, LGVGELTIIVFALIGALLGFL, VFMGDSGSLPLGAVIGFLAIV, LLLIFIAFVFIMETVSVILQV, and KITIRFWIMALITNLIAILSI.

Belongs to the glycosyltransferase 4 family. MraY subfamily. It depends on Mg(2+) as a cofactor.

It is found in the cell inner membrane. It catalyses the reaction UDP-N-acetyl-alpha-D-muramoyl-L-alanyl-gamma-D-glutamyl-meso-2,6-diaminopimeloyl-D-alanyl-D-alanine + di-trans,octa-cis-undecaprenyl phosphate = di-trans,octa-cis-undecaprenyl diphospho-N-acetyl-alpha-D-muramoyl-L-alanyl-D-glutamyl-meso-2,6-diaminopimeloyl-D-alanyl-D-alanine + UMP. It functions in the pathway cell wall biogenesis; peptidoglycan biosynthesis. Its function is as follows. Catalyzes the initial step of the lipid cycle reactions in the biosynthesis of the cell wall peptidoglycan: transfers peptidoglycan precursor phospho-MurNAc-pentapeptide from UDP-MurNAc-pentapeptide onto the lipid carrier undecaprenyl phosphate, yielding undecaprenyl-pyrophosphoryl-MurNAc-pentapeptide, known as lipid I. The chain is Phospho-N-acetylmuramoyl-pentapeptide-transferase from Nautilia profundicola (strain ATCC BAA-1463 / DSM 18972 / AmH).